A 520-amino-acid polypeptide reads, in one-letter code: Cholesterol side-chain cleavage enzyme, mitochondrial (520 aa).

Residues 1–36 constitute a mitochondrion transit peptide; it reads MLAKGLSLRSVLAKGCQPFLSPTWQSSVLATGGGAN. Residue Cys-458 participates in heme binding.

Belongs to the cytochrome P450 family. Interacts with FDX1/adrenodoxin. Heme serves as cofactor.

It is found in the mitochondrion inner membrane. It catalyses the reaction 6 reduced [adrenodoxin] + cholesterol + 3 O2 + 6 H(+) = 4-methylpentanal + pregnenolone + 6 oxidized [adrenodoxin] + 4 H2O. The catalysed reaction is 2 reduced [adrenodoxin] + cholesterol + O2 + 2 H(+) = (22R)-hydroxycholesterol + 2 oxidized [adrenodoxin] + H2O. It carries out the reaction (22R)-hydroxycholesterol + 2 reduced [adrenodoxin] + O2 + 2 H(+) = (20R,22R)-20,22-dihydroxycholesterol + 2 oxidized [adrenodoxin] + H2O. The enzyme catalyses (20R,22R)-20,22-dihydroxycholesterol + 2 reduced [adrenodoxin] + O2 + 2 H(+) = 4-methylpentanal + pregnenolone + 2 oxidized [adrenodoxin] + 2 H2O. It functions in the pathway lipid metabolism; C21-steroid hormone metabolism. The protein operates within steroid metabolism; cholesterol metabolism. A cytochrome P450 monooxygenase that catalyzes the side-chain hydroxylation and cleavage of cholesterol to pregnenolone, the precursor of most steroid hormones. Catalyzes three sequential oxidation reactions of cholesterol, namely the hydroxylation at C22 followed with the hydroxylation at C20 to yield 20R,22R-hydroxycholesterol that is further cleaved between C20 and C22 to yield the C21-steroid pregnenolone and 4-methylpentanal. Mechanistically, uses molecular oxygen inserting one oxygen atom into a substrate and reducing the second into a water molecule. Two electrons are provided by NADPH via a two-protein mitochondrial transfer system comprising flavoprotein FDXR (adrenodoxin/ferredoxin reductase) and nonheme iron-sulfur protein FDX1 or FDX2 (adrenodoxin/ferredoxin). The polypeptide is Cholesterol side-chain cleavage enzyme, mitochondrial (CYP11A1) (Mesocricetus auratus (Golden hamster)).